We begin with the raw amino-acid sequence, 362 residues long: Outer membrane porin F (362 aa).

Residues 1–22 (MMKRNILAVIVPALLVAGTANA) form the signal peptide.

It belongs to the Gram-negative porin family. As to quaternary structure, homotrimer. Forms mixed heterotrimers with OmpC; other mixed heterotrimers are also probable.

The protein resides in the cell outer membrane. In terms of biological role, forms pores that allow passive diffusion of small molecules across the outer membrane. Functionally, (Microbial infection) Is the major receptor for colicin E5. Its function is as follows. (Microbial infection) A mixed OmpC-OmpF heterotrimer is the outer membrane receptor for toxin CdiA-EC536. This is Outer membrane porin F (ompF) from Escherichia coli O6:K15:H31 (strain 536 / UPEC).